A 414-amino-acid chain; its full sequence is Imidazolonepropionase (414 aa).

The segment covering 1–20 (MSHQLFRNTRIYSPMDSGQP) has biased composition (polar residues). Positions 1–26 (MSHQLFRNTRIYSPMDSGQPSAGKAQ) are disordered. Fe(3+) contacts are provided by His81 and His83. Residues His81 and His83 each coordinate Zn(2+). The 4-imidazolone-5-propanoate site is built by Arg90, Tyr153, and His186. N-formimidoyl-L-glutamate is bound at residue Tyr153. Position 251 (His251) interacts with Fe(3+). A Zn(2+)-binding site is contributed by His251. Position 254 (Glu254) interacts with 4-imidazolone-5-propanoate. Asp325 contributes to the Fe(3+) binding site. Asp325 serves as a coordination point for Zn(2+). 2 residues coordinate N-formimidoyl-L-glutamate: Asn327 and Gly329. 4-imidazolone-5-propanoate is bound at residue Ser330.

Belongs to the metallo-dependent hydrolases superfamily. HutI family. Zn(2+) serves as cofactor. It depends on Fe(3+) as a cofactor.

Its subcellular location is the cytoplasm. It carries out the reaction 4-imidazolone-5-propanoate + H2O = N-formimidoyl-L-glutamate. Its pathway is amino-acid degradation; L-histidine degradation into L-glutamate; N-formimidoyl-L-glutamate from L-histidine: step 3/3. Its function is as follows. Catalyzes the hydrolytic cleavage of the carbon-nitrogen bond in imidazolone-5-propanoate to yield N-formimidoyl-L-glutamate. It is the third step in the universal histidine degradation pathway. The polypeptide is Imidazolonepropionase (Desulfotalea psychrophila (strain LSv54 / DSM 12343)).